Reading from the N-terminus, the 527-residue chain is Ankyrin repeat domain-containing protein 42 (527 aa).

The tract at residues 1–27 (MPGVANPGPSKSRRETADSSSRKKVHF) is disordered. Over residues 12 to 21 (SRRETADSSS) the composition is skewed to basic and acidic residues. ANK repeat units follow at residues 25-54 (VHFS…NLNE), 59-88 (HQFT…DATQ), 92-121 (RGWT…NLAT), 125-154 (RGCT…DPSV), 158-187 (REWK…GIED), 191-220 (NGNL…SATQ), 228-257 (NGEN…EGSH), 263-293 (DLAF…NLNE), 297-326 (NGST…ESNI), and 330-360 (AGET…EIDD). The stretch at 395-484 (NARMRAHKKI…ETLQKIQVTS (90 aa)) forms a coiled coil.

The protein is Ankyrin repeat domain-containing protein 42 (Ankrd42) of Mus musculus (Mouse).